Here is a 377-residue protein sequence, read N- to C-terminus: Endolytic peptidoglycan transglycosylase RlpA (377 aa).

A signal peptide spans 1–19 (MHKQLPVICVAAGIVLLAA). A lipid anchor (N-palmitoyl cysteine) is attached at C20. C20 carries S-diacylglycerol cysteine lipidation. Residues 196–277 (LPPRPDLSGG…PVSAPVTAPA (82 aa)) form a disordered region. Composition is skewed to low complexity over residues 208–218 (SASSAPAQPQG) and 264–277 (PQTA…TAPA). Residues 300 to 376 (AAASGRFVVQ…AQLQSFIASA (77 aa)) enclose the SPOR domain.

Belongs to the RlpA family.

The protein localises to the cell membrane. Lytic transglycosylase with a strong preference for naked glycan strands that lack stem peptides. This is Endolytic peptidoglycan transglycosylase RlpA from Salmonella typhi.